Consider the following 352-residue polypeptide: Protein-glutamate methylesterase/protein-glutamine glutaminase 2 (352 aa).

Residues 1-116 enclose the Response regulatory domain; the sequence is MVVDDSAVVR…KQFLTDSADE (116 aa). A 4-aspartylphosphate modification is found at Asp-50. Residues 162–352 form the CheB-type methylesterase domain; the sequence is AQTTERIVAI…MAREIVTQLQ (191 aa). Active-site residues include Ser-174, His-200, and Asp-296.

The protein belongs to the CheB family. In terms of processing, phosphorylated by CheA. Phosphorylation of the N-terminal regulatory domain activates the methylesterase activity.

It localises to the cytoplasm. It carries out the reaction [protein]-L-glutamate 5-O-methyl ester + H2O = L-glutamyl-[protein] + methanol + H(+). The catalysed reaction is L-glutaminyl-[protein] + H2O = L-glutamyl-[protein] + NH4(+). Its function is as follows. Involved in chemotaxis. Part of a chemotaxis signal transduction system that modulates chemotaxis in response to various stimuli. Catalyzes the demethylation of specific methylglutamate residues introduced into the chemoreceptors (methyl-accepting chemotaxis proteins or MCP) by CheR. Also mediates the irreversible deamidation of specific glutamine residues to glutamic acid. The polypeptide is Protein-glutamate methylesterase/protein-glutamine glutaminase 2 (Xanthomonas euvesicatoria pv. vesicatoria (strain 85-10) (Xanthomonas campestris pv. vesicatoria)).